Consider the following 509-residue polypeptide: MGCGCSSHLEDDWMENIDVCENCHYPIVPLDGKATLLFRNGSEVRDPLVRYEGSNPPASPLQDNLVIALHSYEPSHDGDLGFEKGEHLRILEQNGEWWKAQSLTTGQEGFVPFNFVAKANSLEPEPWFFKNLSRKDAERQLLAPGNTHGSFLIRESESTAGSFSLSVRDFDQNQGEVVKHYKIRNLDNGGFYISPRITFSGLHELVRHYTNASDGLCTRLSRPCQTQKPQKPWWEDEWEVPRETLKLVERLGAGQFGEVWMGYYNEHTKVAVKSLKQGSMSPDAFLAEANLMKQLQHKRLVRLYAVVTEEPIYIITEYMENGSLVDFLKTPSGIKLTINKLLDMAAQIVEGMAFLEERNYIHRDLRAANILVSDTLSCKIADFGLARLIEDNEYTAREGAKFPIKWTAPEAINYGTFTIKSDVWSFGILMTEIVTHGRIPYPGMTNPEVIQNLERGYRMPRPDNCPEELYKLMMQCWRERPDDRPTFDYLRSVLEDFFTATEGQYQPQP.

Residue G2 is the site of N-myristoyl glycine attachment. Residues 2–72 form an interactions with CD4 and CD8 region; sequence GCGCSSHLED…DNLVIALHSY (71 aa). 2 S-palmitoyl cysteine lipidation sites follow: C3 and C5. The SH3 domain occupies 61–121; the sequence is LQDNLVIALH…PFNFVAKANS (61 aa). Residue K99 forms a Glycyl lysine isopeptide (Lys-Gly) (interchain with G-Cter in ubiquitin) linkage. Residue S102 is modified to Phosphoserine. The SH2 domain occupies 127-224; sequence WFFKNLSRKD…GLCTRLSRPC (98 aa). Positions 154 to 242 are interaction with PTPRH; that stretch reads RESESTAGSF…WWEDEWEVPR (89 aa). At T159 the chain carries Phosphothreonine. The residue at position 162 (S162) is a Phosphoserine. Residue Y192 is modified to Phosphotyrosine. S194 is subject to Phosphoserine. One can recognise a Protein kinase domain in the interval 245–498; it reads LKLVERLGAG…YLRSVLEDFF (254 aa). ATP is bound by residues 251–259 and K273; that span reads LGAGQFGEV. A Glycyl lysine isopeptide (Lys-Gly) (interchain with G-Cter in ubiquitin) cross-link involves residue K276. D364 serves as the catalytic Proton acceptor. Y394 is modified (phosphotyrosine; by autocatalysis). Y505 is subject to Phosphotyrosine; by CSK.

Belongs to the protein kinase superfamily. Tyr protein kinase family. As to quaternary structure, binds to the cytoplasmic domain of cell surface receptors, such as AXL, CD2, CD4, CD5, CD8, CD44, CD45 and CD122. Also binds to effector molecules, such as PI4K, VAV1, RASA1, FYB1 and to other protein kinases including CDK1, RAF1, ZAP70 and SYK. Binds to phosphatidylinositol 3'-kinase (PI3K) from T-lymphocytes through its SH3 domain and to the tyrosine phosphorylated form of KHDRBS1/p70 through its SH2 domain. Interacts with SQSTM1. Interacts with phosphorylated LIME1. Interacts with CBLB and PTPRH. Interacts with RUNX3. Forms a signaling complex with EPHA1, PTK2B and PI3-KINASE; upon activation by EFNA1 which may regulate T-lymphocytes migration. Associates with ZAP70 and RHOH; these interactions allow LCK-mediated RHOH and CD3 subunit phosphorylations in the presence of functional ZAP70. Interacts with Saimiriine herpesvirus 2 TIP. Interacts with UNC119; this interaction plays a crucial role in activation of LCK. Interacts with CEACAM1 (via cytoplasmic domain); mediates CEACAM1 phosphorylation resulting in PTPN6 recruitment that dephosphorylates TCR stimulation-induced CD247 and ZAP70. Interacts with CD160. Interacts with CD48. Autophosphorylated on Tyr-394, increasing enzymatic activity, this site is dephosphorylated by PTN22. Phosphorylated on Tyr-505 by CSK, decreasing activity. Dephosphorylated by PTPRC/CD45. Dephosphorylation at Tyr-394 by PTPN2 negatively regulates T-cells differentiation. Dephosphorylation at Tyr-394 by DUSP22 negatively regulates T-cell receptor signaling. In terms of processing, myristoylation is required prior to palmitoylation. Post-translationally, palmitoylation regulates association with the plasma membrane and could be mediated by ZDHHC2. 'Lys-63'-linked ubiquitinated at Lys-99 and Lys-276 by UBR2; this modification is required for autophosphorylation at Tyr-394. Expressed specifically in lymphoid cells.

It is found in the cell membrane. The protein localises to the cytoplasm. Its subcellular location is the cytosol. The catalysed reaction is L-tyrosyl-[protein] + ATP = O-phospho-L-tyrosyl-[protein] + ADP + H(+). With respect to regulation, the relative activities of the inhibitory tyrosine-protein kinase CSK and the activating tyrosine-protein phosphatase PTPRC/CD45 determine the level of LCK activity. These interactions allow rapid and efficient activation of LCK in response to TCR stimulation. Its function is as follows. Non-receptor tyrosine-protein kinase that plays an essential role in the selection and maturation of developing T-cells in the thymus and in the function of mature T-cells. Plays a key role in T-cell antigen receptor (TCR)-linked signal transduction pathways. Constitutively associated with the cytoplasmic portions of the CD4 and CD8 surface receptors. Association of the TCR with a peptide antigen-bound MHC complex facilitates the interaction of CD4 and CD8 with MHC class II and class I molecules, respectively, thereby recruiting the associated LCK protein to the vicinity of the TCR/CD3 complex. LCK then phosphorylates tyrosine residues within the immunoreceptor tyrosine-based activation motifs (ITAM) of the cytoplasmic tails of the TCR-gamma chains and CD3 subunits, initiating the TCR/CD3 signaling pathway. Once stimulated, the TCR recruits the tyrosine kinase ZAP70, that becomes phosphorylated and activated by LCK. Following this, a large number of signaling molecules are recruited, ultimately leading to lymphokine production. LCK also contributes to signaling by other receptor molecules. Associates directly with the cytoplasmic tail of CD2, which leads to hyperphosphorylation and activation of LCK. Also plays a role in the IL2 receptor-linked signaling pathway that controls the T-cell proliferative response. Binding of IL2 to its receptor results in increased activity of LCK. Is expressed at all stages of thymocyte development and is required for the regulation of maturation events that are governed by both pre-TCR and mature alpha beta TCR. Phosphorylates other substrates including RUNX3, PTK2B/PYK2, the microtubule-associated protein MAPT, RHOH or TYROBP. The protein is Proto-oncogene tyrosine-protein kinase LCK (LCK) of Saimiri sciureus (Common squirrel monkey).